A 319-amino-acid chain; its full sequence is Cytochrome f (319 aa).

The signal sequence occupies residues 1-35 (MFQQMQKISLKLLKTTFLFLFATFILVGLPSTSQA). The heme site is built by tyrosine 36, cysteine 56, cysteine 59, and histidine 60. Residues 285-305 (IQGLIAFFISVIIAQTFLVLK) form a helical membrane-spanning segment.

The protein belongs to the cytochrome f family. The 4 large subunits of the cytochrome b6-f complex are cytochrome b6, subunit IV (17 kDa polypeptide, petD), cytochrome f and the Rieske protein, while the 4 small subunits are PetG, PetL, PetM and PetN. The complex functions as a dimer. Requires heme as cofactor.

Its subcellular location is the plastid. The protein localises to the chloroplast thylakoid membrane. In terms of biological role, component of the cytochrome b6-f complex, which mediates electron transfer between photosystem II (PSII) and photosystem I (PSI), cyclic electron flow around PSI, and state transitions. The chain is Cytochrome f from Chlorokybus atmophyticus (Soil alga).